A 115-amino-acid chain; its full sequence is NTF2-related export protein 1 (115 aa).

Residues 7-115 (YAQEFVQRYY…LVLRSSTNFL (109 aa)) enclose the NTF2 domain.

The protein localises to the nucleus. Its function is as follows. Stimulator of protein export for NES-containing proteins. Also plays a role in mRNA nuclear export. The protein is NTF2-related export protein 1 (nxt1) of Schizosaccharomyces pombe (strain 972 / ATCC 24843) (Fission yeast).